Here is a 186-residue protein sequence, read N- to C-terminus: Potassium-transporting ATPase KdpC subunit (186 aa).

Residues 10–30 (LTIITMVLCGFLFPLAITLIG) traverse the membrane as a helical segment.

The protein belongs to the KdpC family. As to quaternary structure, the system is composed of three essential subunits: KdpA, KdpB and KdpC.

Its subcellular location is the cell membrane. Its function is as follows. Part of the high-affinity ATP-driven potassium transport (or Kdp) system, which catalyzes the hydrolysis of ATP coupled with the electrogenic transport of potassium into the cytoplasm. This subunit acts as a catalytic chaperone that increases the ATP-binding affinity of the ATP-hydrolyzing subunit KdpB by the formation of a transient KdpB/KdpC/ATP ternary complex. The protein is Potassium-transporting ATPase KdpC subunit of Staphylococcus aureus (strain COL).